The chain runs to 238 residues: Pyridoxine 5'-phosphate synthase (238 aa).

2 residues coordinate 3-amino-2-oxopropyl phosphate: Asn7 and Arg18. The active-site Proton acceptor is the His43. 2 residues coordinate 1-deoxy-D-xylulose 5-phosphate: Arg45 and His50. The active-site Proton acceptor is Glu70. Residue Thr100 participates in 1-deoxy-D-xylulose 5-phosphate binding. The active-site Proton donor is the His190. 3-amino-2-oxopropyl phosphate contacts are provided by residues Asp191 and 213 to 214 (GH).

The protein belongs to the PNP synthase family. Homooctamer; tetramer of dimers.

The protein resides in the cytoplasm. It catalyses the reaction 3-amino-2-oxopropyl phosphate + 1-deoxy-D-xylulose 5-phosphate = pyridoxine 5'-phosphate + phosphate + 2 H2O + H(+). It functions in the pathway cofactor biosynthesis; pyridoxine 5'-phosphate biosynthesis; pyridoxine 5'-phosphate from D-erythrose 4-phosphate: step 5/5. Catalyzes the complicated ring closure reaction between the two acyclic compounds 1-deoxy-D-xylulose-5-phosphate (DXP) and 3-amino-2-oxopropyl phosphate (1-amino-acetone-3-phosphate or AAP) to form pyridoxine 5'-phosphate (PNP) and inorganic phosphate. This is Pyridoxine 5'-phosphate synthase from Parabacteroides distasonis (strain ATCC 8503 / DSM 20701 / CIP 104284 / JCM 5825 / NCTC 11152).